Here is a 163-residue protein sequence, read N- to C-terminus: SsrA-binding protein (163 aa).

Over residues 140–157 the composition is skewed to basic and acidic residues; that stretch reads RRGAIAERESKREMDRAL. Positions 140–163 are disordered; it reads RRGAIAERESKREMDRALARGRRR.

Belongs to the SmpB family.

It localises to the cytoplasm. Functionally, required for rescue of stalled ribosomes mediated by trans-translation. Binds to transfer-messenger RNA (tmRNA), required for stable association of tmRNA with ribosomes. tmRNA and SmpB together mimic tRNA shape, replacing the anticodon stem-loop with SmpB. tmRNA is encoded by the ssrA gene; the 2 termini fold to resemble tRNA(Ala) and it encodes a 'tag peptide', a short internal open reading frame. During trans-translation Ala-aminoacylated tmRNA acts like a tRNA, entering the A-site of stalled ribosomes, displacing the stalled mRNA. The ribosome then switches to translate the ORF on the tmRNA; the nascent peptide is terminated with the 'tag peptide' encoded by the tmRNA and targeted for degradation. The ribosome is freed to recommence translation, which seems to be the essential function of trans-translation. The protein is SsrA-binding protein of Anaeromyxobacter dehalogenans (strain 2CP-C).